The chain runs to 394 residues: Nicotinate phosphoribosyltransferase (394 aa).

H218 is subject to Phosphohistidine; by autocatalysis.

The protein belongs to the NAPRTase family. Post-translationally, transiently phosphorylated on a His residue during the reaction cycle. Phosphorylation strongly increases the affinity for substrates and increases the rate of nicotinate D-ribonucleotide production. Dephosphorylation regenerates the low-affinity form of the enzyme, leading to product release.

It catalyses the reaction nicotinate + 5-phospho-alpha-D-ribose 1-diphosphate + ATP + H2O = nicotinate beta-D-ribonucleotide + ADP + phosphate + diphosphate. Its pathway is cofactor biosynthesis; NAD(+) biosynthesis; nicotinate D-ribonucleotide from nicotinate: step 1/1. Catalyzes the synthesis of beta-nicotinate D-ribonucleotide from nicotinate and 5-phospho-D-ribose 1-phosphate at the expense of ATP. The protein is Nicotinate phosphoribosyltransferase of Xylella fastidiosa (strain 9a5c).